Reading from the N-terminus, the 62-residue chain is Photosystem II reaction center protein Z (62 aa).

Helical transmembrane passes span 8-28 (AVFA…VVFA) and 41-61 (FSGT…NSLI).

This sequence belongs to the PsbZ family. As to quaternary structure, PSII is composed of 1 copy each of membrane proteins PsbA, PsbB, PsbC, PsbD, PsbE, PsbF, PsbH, PsbI, PsbJ, PsbK, PsbL, PsbM, PsbT, PsbY, PsbZ, Psb30/Ycf12, at least 3 peripheral proteins of the oxygen-evolving complex and a large number of cofactors. It forms dimeric complexes.

It localises to the plastid. The protein resides in the chloroplast thylakoid membrane. Functionally, may control the interaction of photosystem II (PSII) cores with the light-harvesting antenna, regulates electron flow through the 2 photosystem reaction centers. PSII is a light-driven water plastoquinone oxidoreductase, using light energy to abstract electrons from H(2)O, generating a proton gradient subsequently used for ATP formation. The protein is Photosystem II reaction center protein Z of Pisum sativum (Garden pea).